The following is a 254-amino-acid chain: Sulfoacetaldehyde reductase (254 aa).

Residue 8–32 (FITGATSGFGEAAAQVFADAGWSLV) participates in NADP(+) binding. Serine 141 contributes to the substrate binding site. The active-site Proton acceptor is the tyrosine 154.

It belongs to the short-chain dehydrogenases/reductases (SDR) family. As to quaternary structure, homodimer and heterotetramer.

It carries out the reaction 2-hydroxyethane-1-sulfonate + NADP(+) = sulfoacetaldehyde + NADPH + H(+). The protein operates within organosulfur degradation. Its function is as follows. Catalyzes the formation of isethionate from 2-sulfoacetaldehyde in the deaminative pathway of taurine. The enzyme is specific for NADPH; NADH is not a substrate. The sequence is that of Sulfoacetaldehyde reductase (isfD) from Klebsiella oxytoca.